Reading from the N-terminus, the 63-residue chain is DNA-directed RNA polymerase 7 kDa subunit (63 aa).

This sequence belongs to the poxviridae DNA-directed RNA polymerase 7 kDa subunit family. In terms of assembly, the DNA-dependent RNA polymerase used for intermediate and late genes expression consists of eight subunits 147 kDa, 133 kDa, 35 kDa, 30 kDa, 22 kDa, 19 kDa, 18 kDa and 7 kDa totalling more than 500 kDa in mass. The same holoenzyme, with the addition of the transcription-specificity factor RAP94, is used for early gene expression.

It localises to the virion. It catalyses the reaction RNA(n) + a ribonucleoside 5'-triphosphate = RNA(n+1) + diphosphate. In terms of biological role, part of the DNA-dependent RNA polymerase which catalyzes the transcription of viral DNA into RNA using the four ribonucleoside triphosphates as substrates. Responsible for the transcription of early, intermediate and late genes. DNA-dependent RNA polymerase associates with the early transcription factor (ETF) thereby allowing the early genes transcription. Late transcription, and probably also intermediate transcription, require newly synthesized RNA polymerase. The polypeptide is DNA-directed RNA polymerase 7 kDa subunit (RPO7) (Molluscum contagiosum virus subtype 1 (MOCV)).